Here is a 1242-residue protein sequence, read N- to C-terminus: Structural polyprotein (1242 aa).

The tract at residues 1-36 is necessary for nucleocapsid assembly and virus assembly; the sequence is MFPYPTLNYPPMAPVNPMAYRDPNPPRRRWRPFRPP. A disordered region spans residues 1–104; sequence MFPYPTLNYP…KQKPGKRQRM (104 aa). The tract at residues 37-70 is host transcription inhibition; the sequence is LAAQIEDLRRSIANLTFKQRAPNPPAGPPAKRKK. The Supraphysiological nuclear export signal motif lies at 44-51; that stretch reads LRRSIANL. Over residues 66–104 the composition is skewed to basic residues; sequence AKRKKPAPKPKPAAPKKKRQPPPAKKQKRKQKPGKRQRM. The Nuclear localization signal signature appears at 67-70; that stretch reads KRKK. The interval 83 to 113 is binding to the viral RNA; the sequence is KRQPPPAKKQKRKQKPGKRQRMCMKLESDKT. A ribosome-binding region spans residues 98–112; that stretch reads PGKRQRMCMKLESDK. At serine 110 the chain carries Phosphoserine. In terms of domain architecture, Peptidase S3 spans 112–261; the sequence is KTFPIMLNGQ…KDTPEGSEPW (150 aa). Phosphothreonine is present on threonine 113. Residues histidine 138, aspartate 160, and serine 212 each act as charge relay system in the active site. Residues 262–273 form a functions as an uncleaved signal peptide for the precursor of protein E3/E2 region; it reads SLTTVMCVLANI. Asparagine 272 carries an N-linked (GlcNAc...) asparagine; by host glycan. At 325–688 the chain is on the extracellular side; sequence DLETHFTQYK…YYYNRYPMTT (364 aa). The chain crosses the membrane as a helical span at residues 689 to 709; sequence VIGLCTCVAIIMVSCVTSVWL. Residues 710 to 744 lie on the Cytoplasmic side of the membrane; it reads LCRTRNLCITPYRLAPNAQVPILLAVLCCVKPTRA. S-palmitoyl cysteine; by host attachment occurs at residues cysteine 717, cysteine 737, and cysteine 738. The segment at 717–737 is transient transmembrane before p62-6K protein processing; that stretch reads CITPYRLAPNAQVPILLAVLC. Residues 745–759 lie on the Extracellular side of the membrane; the sequence is DDTLQVLNYLWNNNQ. 2 helical membrane passes run 760-780 and 781-801; these read NFFW…MRML and RCLL…GAAA. At 802 to 1218 the chain is on the extracellular side; it reads YEHAAVMPNK…WSWLKVLVGS (417 aa). Intrachain disulfides connect cysteine 850-cysteine 915, cysteine 863-cysteine 895, cysteine 864-cysteine 897, cysteine 869-cysteine 879, cysteine 1061-cysteine 1073, cysteine 1103-cysteine 1178, cysteine 1108-cysteine 1182, and cysteine 1130-cysteine 1172. The E1 fusion peptide loop stretch occupies residues 885-902; sequence VYPFMWGGAYCFCDTENT. Residues 1219 to 1239 traverse the membrane as a helical segment; the sequence is TSAFIVLGLIATAVVALVLFT. Over 1240–1242 the chain is Cytoplasmic; the sequence is HRH.

Part of a tetrameric complex composed of host CRM1, host importin alpha/beta dimer and the viral capsid; this complex blocks the receptor-mediated transport through the nuclear pore. Interacts with host phosphatase PPP1CA; this interaction dephosphorylates the capsid protein, which increases its ability to bind to the viral genome. Interacts with host karyopherin KPNA4; this interaction allows the nuclear import of the viral capsid protein. Interacts with spike glycoprotein E2. Interacts with host IRAK1; the interaction leads to inhibition of IRAK1-dependent signaling. In terms of assembly, the precursor of protein E3/E2 and E1 form a heterodimer shortly after synthesis. As to quaternary structure, the precursor of protein E3/E2 and E1 form a heterodimer shortly after synthesis. Processing of the precursor of protein E3/E2 into E2 and E3 results in a heterodimer of the spike glycoproteins E2 and E1. Spike at virion surface are constituted of three E2-E1 heterodimers. After target cell attachment and endocytosis, E1 change conformation to form homotrimers. Interacts with 6K protein. Processing of the precursor of protein E3/E2 into E2 and E3 results in a heterodimer of the spike glycoproteins E2 and E1. Spike at virion surface are constituted of three E2-E1 heterodimers. Interacts with 6K protein. In terms of assembly, interacts with spike glycoprotein E1. Interacts with spike glycoprotein E2. Post-translationally, structural polyprotein: Specific enzymatic cleavages in vivo yield mature proteins. Capsid protein is auto-cleaved during polyprotein translation, unmasking a signal peptide at the N-terminus of the precursor of E3/E2. The remaining polyprotein is then targeted to the host endoplasmic reticulum, where host signal peptidase cleaves it into pE2, 6K and E1 proteins. pE2 is further processed to mature E3 and E2 by host furin in trans-Golgi vesicle. In terms of processing, phosphorylated on serine and threonine residues. Palmitoylated via thioester bonds. These palmitoylations may induce disruption of the C-terminus transmembrane. This would result in the reorientation of E2 C-terminus from lumenal to cytoplasmic side. Post-translationally, N-glycosylated. In terms of processing, palmitoylated via thioester bonds.

The protein resides in the virion. It localises to the host cytoplasm. It is found in the host cell membrane. Its subcellular location is the host nucleus. The protein localises to the virion membrane. It catalyses the reaction Autocatalytic release of the core protein from the N-terminus of the togavirus structural polyprotein by hydrolysis of a -Trp-|-Ser- bond.. Forms an icosahedral capsid with a T=4 symmetry composed of 240 copies of the capsid protein surrounded by a lipid membrane through which penetrate 80 spikes composed of trimers of E1-E2 heterodimers. The capsid protein binds to the viral RNA genome at a site adjacent to a ribosome binding site for viral genome translation following genome release. Possesses a protease activity that results in its autocatalytic cleavage from the nascent structural protein. Following its self-cleavage, the capsid protein transiently associates with ribosomes, and within several minutes the protein binds to viral RNA and rapidly assembles into icosahedric core particles. The resulting nucleocapsid eventually associates with the cytoplasmic domain of the spike glycoprotein E2 at the cell membrane, leading to budding and formation of mature virions. In case of infection, new virions attach to target cells and after clathrin-mediated endocytosis their membrane fuses with the host endosomal membrane. This leads to the release of the nucleocapsid into the cytoplasm, followed by an uncoating event necessary for the genomic RNA to become accessible. The uncoating might be triggered by the interaction of capsid proteins with ribosomes. Binding of ribosomes would release the genomic RNA since the same region is genomic RNA-binding and ribosome-binding. Specifically inhibits interleukin-1 receptor-associated kinase 1/IRAK1-dependent signaling during viral entry, representing a means by which the alphaviruses may evade innate immune detection and activation prior to viral gene expression. Inhibits host transcription. Forms a tetrameric complex with XPO1/CRM1 and the nuclear import receptor importin. This complex blocks the central channel of host nuclear pores thereby inhibiting the receptor-mediated nuclear transport and thus the host mRNA and rRNA transcription. The inhibition of transcription is linked to a cytopathic effect on the host cell. In terms of biological role, provides the signal sequence for the translocation of the precursor of protein E3/E2 to the host endoplasmic reticulum. Furin-cleaved E3 remains associated with spike glycoprotein E1 and mediates pH protection of the latter during the transport via the secretory pathway. After virion release from the host cell, the assembly protein E3 is gradually released in the extracellular space. Functionally, plays a role in viral attachment to target host cell, by binding to the cell receptor. Synthesized as a p62 precursor which is processed by furin at the cell membrane just before virion budding, giving rise to E2-E1 heterodimer. The p62-E1 heterodimer is stable, whereas E2-E1 is unstable and dissociate at low pH. p62 is processed at the last step, presumably to avoid E1 fusion activation before its final export to cell surface. E2 C-terminus contains a transitory transmembrane that would be disrupted by palmitoylation, resulting in reorientation of the C-terminal tail from lumenal to cytoplasmic side. This step is critical since E2 C-terminus is involved in budding by interacting with capsid proteins. This release of E2 C-terminus in cytoplasm occurs lately in protein export, and precludes premature assembly of particles at the endoplasmic reticulum membrane. Its function is as follows. Constitutive membrane protein involved in virus glycoprotein processing, cell permeabilization, and the budding of viral particles. Disrupts the calcium homeostasis of the cell, probably at the endoplasmic reticulum level. This leads to cytoplasmic calcium elevation. Because of its lipophilic properties, the 6K protein is postulated to influence the selection of lipids that interact with the transmembrane domains of the glycoproteins, which, in turn, affects the deformability of the bilayer required for the extreme curvature that occurs as budding proceeds. Present in low amount in virions, about 3% compared to viral glycoproteins. Class II viral fusion protein. Fusion activity is inactive as long as E1 is bound to E2 in mature virion. After virus attachment to target cell and endocytosis, acidification of the endosome would induce dissociation of E1/E2 heterodimer and concomitant trimerization of the E1 subunits. This E1 trimer is fusion active, and promotes release of viral nucleocapsid in cytoplasm after endosome and viral membrane fusion. Efficient fusion requires the presence of cholesterol and sphingolipid in the target membrane. Fusion is optimal at levels of about 1 molecule of cholesterol per 2 molecules of phospholipids, and is specific for sterols containing a 3-beta-hydroxyl group. In Aedes (Human), this protein is Structural polyprotein.